A 441-amino-acid polypeptide reads, in one-letter code: Zinc finger and BTB domain-containing protein 8A (441 aa).

The region spanning 24 to 92 (CDCSILVEGK…VYSGKLSLTG (69 aa)) is the BTB domain. The segment at 135–248 (LSDKDTGSNG…HVSQSEEQVQ (114 aa)) is disordered. Serine 161 and serine 167 each carry phosphoserine. Glycyl lysine isopeptide (Lys-Gly) (interchain with G-Cter in SUMO2) cross-links involve residues lysine 178, lysine 182, and lysine 199. 2 stretches are compositionally biased toward basic and acidic residues: residues 198–208 (AKHEQRKDPIK) and 227–242 (GKGD…HVSQ). C2H2-type zinc fingers lie at residues 282–304 (FKCP…LRCH) and 310–333 (YPCQ…RTIH). A Glycyl lysine isopeptide (Lys-Gly) (interchain with G-Cter in SUMO2) cross-link involves residue lysine 437.

The protein resides in the nucleus. May be involved in transcriptional regulation. This chain is Zinc finger and BTB domain-containing protein 8A (Zbtb8a), found in Rattus norvegicus (Rat).